Here is a 279-residue protein sequence, read N- to C-terminus: Undecaprenyl-diphosphatase (279 aa).

Transmembrane regions (helical) follow at residues 45–65 (FVEM…IVIY), 85–105 (WQLW…ALPF), 113–133 (FNFM…FIWV), 188–208 (SVAA…YSGL), 226–246 (LILL…IRFL), and 255–275 (FTIF…YWLV).

The protein belongs to the UppP family.

It is found in the cell membrane. It carries out the reaction di-trans,octa-cis-undecaprenyl diphosphate + H2O = di-trans,octa-cis-undecaprenyl phosphate + phosphate + H(+). Its function is as follows. Catalyzes the dephosphorylation of undecaprenyl diphosphate (UPP). Confers resistance to bacitracin. This is Undecaprenyl-diphosphatase from Streptococcus agalactiae serotype Ia (strain ATCC 27591 / A909 / CDC SS700).